Reading from the N-terminus, the 348-residue chain is NADH-quinone oxidoreductase subunit H (348 aa).

A run of 8 helical transmembrane segments spans residues 10–30 (LPLF…LVLI), 82–102 (GVFL…WAVV), 115–135 (VGLL…IMGG), 161–181 (IGFV…TTIV), 199–219 (LLDW…ISAL), 251–271 (LFFL…TILF), 287–307 (VPGV…FAMV), and 322–342 (LGWK…AAIL).

The protein belongs to the complex I subunit 1 family. NDH-1 is composed of 14 different subunits. Subunits NuoA, H, J, K, L, M, N constitute the membrane sector of the complex.

Its subcellular location is the cell inner membrane. The enzyme catalyses a quinone + NADH + 5 H(+)(in) = a quinol + NAD(+) + 4 H(+)(out). Functionally, NDH-1 shuttles electrons from NADH, via FMN and iron-sulfur (Fe-S) centers, to quinones in the respiratory chain. The immediate electron acceptor for the enzyme in this species is believed to be ubiquinone. Couples the redox reaction to proton translocation (for every two electrons transferred, four hydrogen ions are translocated across the cytoplasmic membrane), and thus conserves the redox energy in a proton gradient. This subunit may bind ubiquinone. This is NADH-quinone oxidoreductase subunit H from Bartonella bacilliformis (strain ATCC 35685 / KC583 / Herrer 020/F12,63).